The chain runs to 154 residues: UPF0178 protein ABC1688 (154 aa).

This sequence belongs to the UPF0178 family.

The polypeptide is UPF0178 protein ABC1688 (Shouchella clausii (strain KSM-K16) (Alkalihalobacillus clausii)).